A 186-amino-acid polypeptide reads, in one-letter code: Ribosome-recycling factor (186 aa).

It belongs to the RRF family.

Its subcellular location is the cytoplasm. Functionally, responsible for the release of ribosomes from messenger RNA at the termination of protein biosynthesis. May increase the efficiency of translation by recycling ribosomes from one round of translation to another. The protein is Ribosome-recycling factor of Burkholderia multivorans (strain ATCC 17616 / 249).